Reading from the N-terminus, the 258-residue chain is Imidazole glycerol phosphate synthase subunit HisF (258 aa).

Active-site residues include aspartate 11 and aspartate 130.

It belongs to the HisA/HisF family. In terms of assembly, heterodimer of HisH and HisF.

It localises to the cytoplasm. The catalysed reaction is 5-[(5-phospho-1-deoxy-D-ribulos-1-ylimino)methylamino]-1-(5-phospho-beta-D-ribosyl)imidazole-4-carboxamide + L-glutamine = D-erythro-1-(imidazol-4-yl)glycerol 3-phosphate + 5-amino-1-(5-phospho-beta-D-ribosyl)imidazole-4-carboxamide + L-glutamate + H(+). It participates in amino-acid biosynthesis; L-histidine biosynthesis; L-histidine from 5-phospho-alpha-D-ribose 1-diphosphate: step 5/9. In terms of biological role, IGPS catalyzes the conversion of PRFAR and glutamine to IGP, AICAR and glutamate. The HisF subunit catalyzes the cyclization activity that produces IGP and AICAR from PRFAR using the ammonia provided by the HisH subunit. This is Imidazole glycerol phosphate synthase subunit HisF from Lachnoclostridium phytofermentans (strain ATCC 700394 / DSM 18823 / ISDg) (Clostridium phytofermentans).